Consider the following 162-residue polypeptide: UPF0305 protein MMP0665 (162 aa).

This sequence belongs to the UPF0305 family.

The protein is UPF0305 protein MMP0665 of Methanococcus maripaludis (strain DSM 14266 / JCM 13030 / NBRC 101832 / S2 / LL).